Here is a 92-residue protein sequence, read N- to C-terminus: Small ribosomal subunit protein uS19c (92 aa).

It belongs to the universal ribosomal protein uS19 family.

Its subcellular location is the plastid. The protein localises to the chloroplast. In terms of biological role, protein S19 forms a complex with S13 that binds strongly to the 16S ribosomal RNA. The chain is Small ribosomal subunit protein uS19c from Cucumis sativus (Cucumber).